Consider the following 414-residue polypeptide: Esterase FrsA (414 aa).

The protein belongs to the FrsA family.

It catalyses the reaction a carboxylic ester + H2O = an alcohol + a carboxylate + H(+). In terms of biological role, catalyzes the hydrolysis of esters. This chain is Esterase FrsA, found in Salmonella choleraesuis (strain SC-B67).